The following is a 330-amino-acid chain: Aspartate--ammonia ligase (330 aa).

This sequence belongs to the class-II aminoacyl-tRNA synthetase family. AsnA subfamily.

The protein localises to the cytoplasm. It catalyses the reaction L-aspartate + NH4(+) + ATP = L-asparagine + AMP + diphosphate + H(+). The protein operates within amino-acid biosynthesis; L-asparagine biosynthesis; L-asparagine from L-aspartate (ammonia route): step 1/1. The chain is Aspartate--ammonia ligase from Streptococcus pyogenes serotype M2 (strain MGAS10270).